We begin with the raw amino-acid sequence, 456 residues long: Enolase (456 aa).

Gln-177 is a (2R)-2-phosphoglycerate binding site. The Proton donor role is filled by Glu-219. Positions 256, 310, and 337 each coordinate Mg(2+). Lys-362, Arg-391, Ser-392, and Lys-413 together coordinate (2R)-2-phosphoglycerate. Lys-362 (proton acceptor) is an active-site residue.

The protein belongs to the enolase family. As to quaternary structure, homodimer. Mg(2+) serves as cofactor.

The protein resides in the cytoplasm. Its subcellular location is the secreted. The protein localises to the cell surface. The enzyme catalyses (2R)-2-phosphoglycerate = phosphoenolpyruvate + H2O. The protein operates within carbohydrate degradation; glycolysis; pyruvate from D-glyceraldehyde 3-phosphate: step 4/5. Its function is as follows. Catalyzes the reversible conversion of 2-phosphoglycerate (2-PG) into phosphoenolpyruvate (PEP). It is essential for the degradation of carbohydrates via glycolysis. In terms of biological role, 'Moonlights' as a plasminogen receptor. Binds plasminogen, but no fibronectin binding was observed. Plasminogen binding increases bacterial adherence to host cells; plasmin activity leads to degradation of host extracellular matrix proteins, facilitating bacterial dissemination and disease spread. This Mycoplasma pneumoniae (strain ATCC 29342 / M129 / Subtype 1) (Mycoplasmoides pneumoniae) protein is Enolase.